A 432-amino-acid polypeptide reads, in one-letter code: MPQYLLKRHLRHLKSISVNNISLIDESKKIGSRVGFIPCFIVLEDTRSRKPFYVSELETGSLSSLHFTELVIPKEFELCTLFEIKIAAKIPSFLLRHDEDELWCFVAMHTVNLDELTYIGNQRDDHITMEQNLPMIEMIDGWYALPNKNIRYTGLQISPVANMNNKNRKRMCPFNSLVKLSKLTQYTGDMVEEKQISTNKIERLIKSTHNIGTGILDTYQENIKMIESRCEIKRQKLKRLKDQLSELDDGNELNDVDSNIETYRDEYANIYSKLSNAKEAIEKLQKKKLIQLINVFKNTFLFDKDVGLISFQFDDDEIEVEEFCKNLERVSIEQIYDRYNEYPKSVKIINAMLGFYSLFIVIYSYRIIQRKLPFDIVFQGSETIVGRKYRLSFPESRSTKSKEEFHIALRAFNENIMQFTQYLGHITQSFTI.

Asn20 carries N-linked (GlcNAc...) asparagine glycosylation. Residues 216 to 287 (LDTYQENIKM…KEAIEKLQKK (72 aa)) are a coiled coil. The helical transmembrane segment at 348–365 (IINAMLGFYSLFIVIYSY) threads the bilayer.

The protein belongs to the VPS38 family. Component of the VPS34 PI3-kinase complex II composed of VPS15, VPS30, VPS34 and VPS38.

It is found in the golgi apparatus. The protein resides in the trans-Golgi network membrane. It localises to the endosome membrane. Its function is as follows. Involved in endosome-to-Golgi retrograde transport as part of the VPS34 PI3-kinase complex II. This complex is required for the endosome-to-Golgi retrieval of PEP1 and KEX2, and the recruitment of VPS5 and VPS7, two components of the retromer complex, to endosomal membranes (probably through generating a specific pool of phosphatidylinositol 3-phosphate allowing the recruitment of the retromer complex proteins to the endosome). Mediates the interaction between VPS30 and the VPS34-VPS15 core complex, leading to the recruitment of VPS30 to the membrane. The chain is Vacuolar protein sorting-associated protein 38 from Candida glabrata (strain ATCC 2001 / BCRC 20586 / JCM 3761 / NBRC 0622 / NRRL Y-65 / CBS 138) (Yeast).